The following is a 193-amino-acid chain: dTTP/UTP pyrophosphatase (193 aa).

The active-site Proton acceptor is the D77.

It belongs to the Maf family. YhdE subfamily. The cofactor is a divalent metal cation.

It is found in the cytoplasm. It catalyses the reaction dTTP + H2O = dTMP + diphosphate + H(+). The catalysed reaction is UTP + H2O = UMP + diphosphate + H(+). Nucleoside triphosphate pyrophosphatase that hydrolyzes dTTP and UTP. May have a dual role in cell division arrest and in preventing the incorporation of modified nucleotides into cellular nucleic acids. This chain is dTTP/UTP pyrophosphatase, found in Bacteroides fragilis (strain ATCC 25285 / DSM 2151 / CCUG 4856 / JCM 11019 / LMG 10263 / NCTC 9343 / Onslow / VPI 2553 / EN-2).